The chain runs to 1771 residues: MSFQQTNNNATNNINSLEELAAQELIAAQFEGNLDGFFCTFYVQSKPQLLDLESECYCMDDFDCGCDRIKREEELRKLIFLTSDVYGYNFEEWKGLVWKFVQNYCPEHRYGSTFGNGLLIVSPRFFMDHLDWFQQWKLVSSNDECRAFLRKRTQLLMSGDVESNPGPVQSRPVYACDNDPRAIRLEKALQRRDEKISTLIKKLRQEIKNNRIYTQGFFDDLKGAKGEVGQLNGNLTRICDFLENSLPTLTAQIQTTVLTTTDKYVNLKEDLLKVAILLVLVRLLMVWKKYRAALIVIILFVMHFYGFDKQILDIVLDLKDKILQTTTQAGTETLEEVVYHPWFDTCGKLIFAVLAFFAIKKIPGKQDWDNYISRLDRIPKAIEGSKKIVDYCSEYFNLSVDEVKKVVLGKELKGTQGLYDEIHVWAKEIRHYLDLDERNKITLDTETAAKVEDLYKRGLKYSEEKIPDRDIARFITTMLFPAKSLYEQVLLSPVKGGGPKMRPITVWLTGESGIGKTQMIYPLCIDILREMGIVKPDAYKHQAYARQVETEYWDGYNGQKIVIYDDAFQLKDDKTKPNPEIFEVIRTCNTFPQHLHMAALQDKNMYSQAEVLLYTTNQFQVQLESITFPDAFYNRMKTHAYRVQIKQEKSIWVRNARGEEYNALDVTKLNKDEAIDLSVYEFQKMRFDDESATKWIDDGEPISYDEFARTICKAWKEEKEKTFHQLQWLEAYASRTVAQGGSETSEYYDVWDETYFSNLLSQGFMAGKSLIEMEAEFASDAETFNAYIEYKKNIPKETKWSKWMTILDEQISALSTKIRELKNKAYKFISEHPYLTALGFIGVMISAFAMYSFFERTLTDDTITSEVGSSGDNKTQKISKRVVEVGGSGDVKTTKPAKTAVEVGSSGDSKTMKNKITKVEVGSSGDSKTQKQRNTKVEVGKELEKEAETQGCSDPAAHALVLDVLQKNTYCLYYERMVKGEMKRYRLATATFLRGWVCMMPYHFIETLYARKVAPSTNIYFSQPNCDDVIVVPVSHFIAPNAERVELTTACTRIHYKDETPRDCVLVNLHRRMCHPHRDILKHFVKKSDQGNLRGVFQGTLATFHQSANELCRAYQWLQAIRPLDQEITIYHEDTDMFDYESESYTQRDCYEYNAPTQTGNCGSIVGLYNKRMERKLIGMHIPGNVSECHGYACPLTQEAIMDGLNRLEKLDPVNNITVQCCFEPPSDIKDTMSGETPEGKFCAIGKSNIKVGQAVKTTLLKSCIYGMLSKPITKPAHLTRTRLPNGEIVDPLMKGLKKCGVDTAVLDAEIVESAALDVKQVVLTQYNSMLDVNKYRRFLTYEEATQGTGDDDFMKGIARQTSPGYRYFQMPRKLPGKQDWMGSGEQYDFTSQRAQELRRDVEELIDNCAKGIIKDVVFVDTLKDERRPIEKVDAGKTRVFSAGPQHFVVAFRKYFLPFAAYLMNNRIDNEIAVGTNVYSTDWERIAKRLKKHGNKVIAGDFGNFDGSLVAQFFGQSCGKSFYPWFKTFNDVNTEDGKRNLMICIGLWTHIVHSVHSYGDNVYMWTHSQPSGNPFTVIINCLYNSMIMRIVWILLARKLAPEMQSMKKFRENVSMISYGDDNCLNISDRVVEWFNQITISEQMKEIKHEYTDEGKTGDMVKFPSLSEIHFLKKRFVFSHQLQRTVAPLQKDVIYEMLNWTRNTIDPNEILMMNINTAFREIVYHGKSEYQKLRSGIEDLAMKGILPQQPQILTFKAYLWDATMLADEVYDF.

Positions 1–29 form a coiled coil; the sequence is MSFQQTNNNATNNINSLEELAAQELIAAQ. The interval 16 to 25 is BC-box; that stretch reads SLEELAAQEL. The tract at residues 106–114 is interaction with and inhibition of host AGO2; sequence PEHRYGSTF. The region spanning 482-656 is the SF3 helicase domain; it reads AKSLYEQVLL…QEKSIWVRNA (175 aa). ATP is bound at residue 510–517; that stretch reads GESGIGKT. The segment at 919-942 is disordered; it reads VEVGSSGDSKTQKQRNTKVEVGKE. Residues 954–1201 form the Peptidase C3 domain; it reads DPAAHALVLD…YACPLTQEAI (248 aa). Active-site for picornain 3C-like protease activity residues include H1003, D1063, and C1162. Residues 1385–1413 are a coiled coil; that stretch reads GEQYDFTSQRAQELRRDVEELIDNCAKGI. In terms of domain architecture, RdRp catalytic spans 1495 to 1634; that stretch reads NKVIAGDFGN…NISDRVVEWF (140 aa).

As to quaternary structure, interacts with host AGO2; this interaction leads to AGO2 degradation via an E3 ubiquitin ligase-dependent pathway and may block the RNA-induced silencing complexes (RISC) activity. In terms of processing, might be expressed through a ribosomal skip from one codon to the next without formation of a peptide bond.

The protein resides in the host cytoplasm. It is found in the host perinuclear region. The catalysed reaction is RNA(n) + a ribonucleoside 5'-triphosphate = RNA(n+1) + diphosphate. In terms of biological role, suppressor of RNA-mediated gene silencing, an antiviral defense mechanism of insect cells. Inhibits siRNA function through the direct enzymatic inactivation of host AGO2, but does not interfere with miRNA pathway. Facilitates viral replication via the recruitment of a cellular ubiquitin ligase complex that promotes host AGO2 degradation. Inhibits the integrated stress response (ISR) in the infected cell possiby by degrading host Nup358. Stress granule formation is thus inhibited, which allows protein synthesis and viral replication. Does not bind to dsRNA or siRNA. Functionally, replicates the genomic and antigenomic RNA. The protein is Replicase polyprotein of Teleogryllus oceanicus (black field cricket).